Consider the following 853-residue polypeptide: MSTIDNLDAHTPMMQQYLKLKAQHPDILLFYRMGDFYELFYDDAKRASQLLDISLTKRGASAGEPIPMAGIPHHAVENYLAKLVNQGESVAICEQIGDPATTKGPVERKVVRIVTPGTISDEALLQERQDNLLAAIWQDSKGFGYATLDISSGRFRLSEPADRETMAAELQRTNPAELLYAEDFAESSLIEGRRGLRRRPLWEFEIDTARQQLNLQFGTRDLVGFGVENAPRGLCAAGCLLQYVKDTQRTSLPHIRSITMERQQDSIIMDAATRRNLEITQNLAGGTDNTLASVLDCTVTPMGSRMLKRWLHMPVRDTAVLVERQQTIGALQERYTELQPVLRQVGDLERILARLALRTARPRDLARMRHALQQLPLLRELLADVDSQPVQKLREKMGEFTELRELLERAVIDAPPVLVRDGGVIAPGYSEELDEWRALADGATDYLDKLEIRERERLGLDTLKVGYNAVHGYYIQISRGQSHLAPIHYVRRQTLKNAERYIIPELKEYEDKVLTSKGKALALEKQLYDELFDLLLPHLADLQTSASALAELDVLVNLAERAETLNYCCPTFSDKPGIRISEGRHPVVEQVLKEPFIANPLQLAPQRRMLIITGPNMGGKSTYMRQTALIALLAYIGSYVPAQKVEIGPIDRIFTRVGAADDLASGRSTFMVEMTETANILHNATEHSLVLMDEIGRGTSTYDGLSLAWACAENLANKIKALTLFATHYFELTQLPEKMEGVANVHLDALEHGDTIAFMHSVQDGAASKSYGLAVAALAGVPKEVIKRARQKLRELESISPNAAATQVDGTQMSLLAAPEETSPAVEALENLDPDSLTPRQALEWIYRLKSLV.

614 to 621 (GPNMGGKS) contributes to the ATP binding site.

The protein belongs to the DNA mismatch repair MutS family.

This protein is involved in the repair of mismatches in DNA. It is possible that it carries out the mismatch recognition step. This protein has a weak ATPase activity. This Klebsiella pneumoniae subsp. pneumoniae (strain ATCC 700721 / MGH 78578) protein is DNA mismatch repair protein MutS.